We begin with the raw amino-acid sequence, 55 residues long: Large ribosomal subunit protein bL33 (55 aa).

It belongs to the bacterial ribosomal protein bL33 family.

In Rhizobium etli (strain CIAT 652), this protein is Large ribosomal subunit protein bL33.